Consider the following 456-residue polypeptide: 3-isopropylmalate dehydratase large subunit (456 aa).

[4Fe-4S] cluster-binding residues include C336, C396, and C399.

This sequence belongs to the aconitase/IPM isomerase family. LeuC type 1 subfamily. In terms of assembly, heterodimer of LeuC and LeuD. The cofactor is [4Fe-4S] cluster.

The enzyme catalyses (2R,3S)-3-isopropylmalate = (2S)-2-isopropylmalate. It participates in amino-acid biosynthesis; L-leucine biosynthesis; L-leucine from 3-methyl-2-oxobutanoate: step 2/4. Functionally, catalyzes the isomerization between 2-isopropylmalate and 3-isopropylmalate, via the formation of 2-isopropylmaleate. This Staphylococcus saprophyticus subsp. saprophyticus (strain ATCC 15305 / DSM 20229 / NCIMB 8711 / NCTC 7292 / S-41) protein is 3-isopropylmalate dehydratase large subunit.